The following is a 348-amino-acid chain: MAEKVLVTGGAGYIGSHTVLELLEAGYLPVVIDNFHNAFRGGGSLPESLRRVQELTGRSVEFEEMDILDQGALQRLFKKYSFMAVIHFAGLKAVGESVQKPLDYYRVNLTGTIQLLEIMKAHGVKNLVFSSSATVYGNPQYLPLDEAHPTGGCTNPYGKSKFFIEEMIRDLCQADKTWNAVLLRYFNPTGAHASGCIGEDPQGIPNNLMPYVSQVAIGRREALNVFGNDYDTEDGTGVRDYIHVVDLAKGHIAALRKLKEQCGCRIYNLGTGTGYSVLQMVQAMEKASGKKIPYKVVARREGDVAACYANPSLAQEELGWTAALGLDRMCEDLWRWQKQNPSGFGTQA.

NAD(+) contacts are provided by residues 12–14 (GYI), 33–37 (DNFHN), 66–67 (DI), F88, and K92. 132 to 134 (SAT) lines the substrate pocket. The Proton acceptor role is filled by Y157. Positions 161 and 185 each coordinate NAD(+). Substrate contacts are provided by residues 185–187 (YFN), 206–208 (NNL), 224–226 (NVF), R239, and 300–303 (REGD).

Belongs to the NAD(P)-dependent epimerase/dehydratase family. As to quaternary structure, homodimer. The cofactor is NAD(+).

It carries out the reaction UDP-alpha-D-glucose = UDP-alpha-D-galactose. It catalyses the reaction UDP-N-acetyl-alpha-D-glucosamine = UDP-N-acetyl-alpha-D-galactosamine. The protein operates within carbohydrate metabolism; galactose metabolism. Its function is as follows. Catalyzes two distinct but analogous reactions: the reversible epimerization of UDP-glucose to UDP-galactose and the reversible epimerization of UDP-N-acetylglucosamine to UDP-N-acetylgalactosamine. The reaction with UDP-Gal plays a critical role in the Leloir pathway of galactose catabolism in which galactose is converted to the glycolytic intermediate glucose 6-phosphate. It contributes to the catabolism of dietary galactose and enables the endogenous biosynthesis of both UDP-Gal and UDP-GalNAc when exogenous sources are limited. Both UDP-sugar interconversions are important in the synthesis of glycoproteins and glycolipids. The chain is UDP-glucose 4-epimerase from Homo sapiens (Human).